A 779-amino-acid polypeptide reads, in one-letter code: Mesenchyme-specific cell surface glycoprotein (779 aa).

An N-terminal signal peptide occupies residues 1–15; that stretch reads MQFGVPLLVLCLALG. Asparagine 203 and asparagine 234 each carry an N-linked (GlcNAc...) asparagine glycan. The tract at residues 249–363 is disordered; it reads AGFPRGTTWS…QYPMIPTTPL (115 aa). Residues 262 to 351 show a composition bias toward gly residues; it reads GAGGQGGQGQ…GGQGGQGGGN (90 aa). N-linked (GlcNAc...) asparagine glycans are attached at residues asparagine 369, asparagine 451, and asparagine 609.

As to expression, restricted to the primary mesenchyme cell lineage.

Its subcellular location is the cell membrane. Functionally, not known. Could be involved in mesenchyme cell migration, adhesion, fusion, or spicule formation. This is Mesenchyme-specific cell surface glycoprotein from Strongylocentrotus purpuratus (Purple sea urchin).